The following is a 90-amino-acid chain: Cell division topological specificity factor 2 (90 aa).

Belongs to the MinE family.

Prevents the cell division inhibition by proteins MinC and MinD at internal division sites while permitting inhibition at polar sites. This ensures cell division at the proper site by restricting the formation of a division septum at the midpoint of the long axis of the cell. This chain is Cell division topological specificity factor 2, found in Syntrophomonas wolfei subsp. wolfei (strain DSM 2245B / Goettingen).